Reading from the N-terminus, the 753-residue chain is 5-methyltetrahydropteroyltriglutamate--homocysteine methyltransferase (753 aa).

Residues 17 to 20 (RELK) and Lys-117 contribute to the 5-methyltetrahydropteroyltri-L-glutamate site. Residues 431–433 (IGS) and Glu-484 contribute to the L-homocysteine site. Residues 431–433 (IGS) and Glu-484 each bind L-methionine. 5-methyltetrahydropteroyltri-L-glutamate-binding positions include 515-516 (RC) and Trp-561. Asp-599 provides a ligand contact to L-homocysteine. Asp-599 is a binding site for L-methionine. Residue Glu-605 coordinates 5-methyltetrahydropteroyltri-L-glutamate. 3 residues coordinate Zn(2+): His-641, Cys-643, and Glu-665. Catalysis depends on His-694, which acts as the Proton donor. Cys-726 contributes to the Zn(2+) binding site.

This sequence belongs to the vitamin-B12 independent methionine synthase family. Zn(2+) is required as a cofactor.

The catalysed reaction is 5-methyltetrahydropteroyltri-L-glutamate + L-homocysteine = tetrahydropteroyltri-L-glutamate + L-methionine. It participates in amino-acid biosynthesis; L-methionine biosynthesis via de novo pathway; L-methionine from L-homocysteine (MetE route): step 1/1. Catalyzes the transfer of a methyl group from 5-methyltetrahydrofolate to homocysteine resulting in methionine formation. In Escherichia coli O8 (strain IAI1), this protein is 5-methyltetrahydropteroyltriglutamate--homocysteine methyltransferase.